A 677-amino-acid polypeptide reads, in one-letter code: MPGFLVRILPLLLALLLLGPTRGLRNATQRMFEIDYSRDCFLKDGQPFRYISGSIHYSRVPRFYWKDRLLKMKMAGLNAIQTYVPWNFHEPWPGQYQFSEDHDVEYFLQLAHELGLLVILRPGPYICAEWEMGGLPAWLLEKESILLRSSDPDYLAAVDKWLGVLLPKMKPLLYQNGGPVITVQVENEYGSYFACDFDYLRFLQKCFRHHLGDDVVLFTTDGAHKTFLKCGALQGLYTTVDFGTGSNITDAFLSQRKCEPKGPLINSEFYTGWLDHWGQPHSTIKTEAVASSLYDILARGASVNLYMFIGGTNFAYWNGANTPYAAQPTSYDYDAPLSEAGDLTEKYFALRNIIQKFEKVPEGPIPPSTPKFAYGKVALEKLKTVGAALDILCPSGPIKSLYPLTFIQVKQHYGFVLYRTTLPQDCSNPAPLSSPFNGVHDRAYVAVDGIPQGVLERNNVITLNITGKAGATLDLLVENMGRVNYGAYINDFKGLVSNLTLSSNILTDWTIFPLDTEDAVRSHLGGWGHRDSGHHDEAWAHSSSNYTLPAFYVGNFSIPSGIPDLPQDTFIQFPGWTKGQVWINGFNLGRYWPARGPQLTLFVPQHILMTSAPNTITMLELERAPCSNDDPELCAVTFVDRPVIGSSVTYDHPSKPVEKKLMPSPPQKNKDSWLDHV.

The first 23 residues, 1–23, serve as a signal peptide directing secretion; the sequence is MPGFLVRILPLLLALLLLGPTRG. Residues 24–28 constitute a propeptide that is removed on maturation; sequence LRNAT. N-linked (GlcNAc...) asparagine glycosylation is present at asparagine 26. Substrate contacts are provided by tyrosine 83, glutamate 129, and asparagine 187. Glutamate 188 serves as the catalytic Proton donor. An intrachain disulfide couples cysteine 195 to cysteine 230. Asparagine 247 is a glycosylation site (N-linked (GlcNAc...) asparagine). Glutamate 268 functions as the Nucleophile in the catalytic mechanism. Residue tyrosine 333 coordinates substrate. 4 N-linked (GlcNAc...) asparagine glycosylation sites follow: asparagine 464, asparagine 498, asparagine 545, and asparagine 555. Cysteine 626 and cysteine 634 are oxidised to a cystine. A disordered region spans residues 654-677; the sequence is SKPVEKKLMPSPPQKNKDSWLDHV. The segment covering 668–677 has biased composition (basic and acidic residues); sequence KNKDSWLDHV.

This sequence belongs to the glycosyl hydrolase 35 family. In terms of assembly, homodimer. May form higher multimers.

Its subcellular location is the lysosome. It carries out the reaction Hydrolysis of terminal non-reducing beta-D-galactose residues in beta-D-galactosides.. Cleaves beta-linked terminal galactosyl residues from gangliosides, glycoproteins, and glycosaminoglycans. The chain is Beta-galactosidase (GLB1) from Pongo abelii (Sumatran orangutan).